The following is a 513-amino-acid chain: Na(+)/H(+) antiporter NhaB (513 aa).

The next 12 helical transmembrane spans lie at L23–A43, I52–I72, L97–F117, L120–F140, F144–I164, L202–P222, F238–L258, A303–I323, T348–I368, L391–I411, A447–I467, and V475–F495.

It belongs to the NhaB Na(+)/H(+) (TC 2.A.34) antiporter family.

It is found in the cell inner membrane. It catalyses the reaction 2 Na(+)(in) + 3 H(+)(out) = 2 Na(+)(out) + 3 H(+)(in). Its function is as follows. Na(+)/H(+) antiporter that extrudes sodium in exchange for external protons. The protein is Na(+)/H(+) antiporter NhaB of Shigella boydii serotype 18 (strain CDC 3083-94 / BS512).